A 740-amino-acid chain; its full sequence is Eukaryotic translation initiation factor 3 subunit B (740 aa).

Positions 1–10 are enriched in polar residues; the sequence is MAPSFDTLSE. Residues 1–20 are disordered; that stretch reads MAPSFDTLSEQDLHEEEEEE. An RRM domain is found at 40–126; it reads TFVVIDGLPV…HTLLVNKLMD (87 aa). WD repeat units follow at residues 193-230, 232-289, 302-343, 455-496, 513-556, and 571-609; these read AHWT…KQKQ, PHPF…RSFV, EPKK…LLGK, SLKD…SFFA, IEKK…EKPE, and IEHY…HTFA. Positions 695–721 are disordered; sequence DAYGLPEEADDPKLAKDAAATTQEQGE.

The protein belongs to the eIF-3 subunit B family. As to quaternary structure, component of the eukaryotic translation initiation factor 3 (eIF-3) complex.

The protein resides in the cytoplasm. RNA-binding component of the eukaryotic translation initiation factor 3 (eIF-3) complex, which is involved in protein synthesis of a specialized repertoire of mRNAs and, together with other initiation factors, stimulates binding of mRNA and methionyl-tRNAi to the 40S ribosome. The eIF-3 complex specifically targets and initiates translation of a subset of mRNAs involved in cell proliferation. This is Eukaryotic translation initiation factor 3 subunit B (prt1) from Neosartorya fischeri (strain ATCC 1020 / DSM 3700 / CBS 544.65 / FGSC A1164 / JCM 1740 / NRRL 181 / WB 181) (Aspergillus fischerianus).